Consider the following 458-residue polypeptide: Monomethylamine methyltransferase MtmB1 (458 aa).

Residue O202 is a non-standard amino acid, pyrrolysine.

Belongs to the monomethylamine methyltransferase family. In terms of assembly, can form a complex with MtmC.

It catalyses the reaction Co(I)-[methylamine-specific corrinoid protein] + methylamine + H(+) = methyl-Co(III)-[methylamine-specific corrinoid protein] + NH4(+). Its pathway is one-carbon metabolism; methanogenesis from methylamine. In terms of biological role, catalyzes the transfer of the methyl group from monomethylamine to the corrinoid cofactor of MtmC. This chain is Monomethylamine methyltransferase MtmB1 (mtmB1), found in Methanosarcina acetivorans (strain ATCC 35395 / DSM 2834 / JCM 12185 / C2A).